We begin with the raw amino-acid sequence, 200 residues long: Nitrile hydratase subunit alpha (200 aa).

Fe(3+) contacts are provided by C105, C108, S109, and C110. A Cysteine sulfinic acid (-SO2H) modification is found at C108. Residue C110 is modified to Cysteine sulfenic acid (-SOH).

It belongs to the nitrile hydratase subunit alpha family. Heterodimer of an alpha and a beta chain. The cofactor is Fe(3+). Oxidation on Cys-108 is essential for the activity. In terms of processing, oxidation on Cys-110 stabilizes the Fe-NO ligand coordinated in the inactive form.

It carries out the reaction an aliphatic primary amide = an aliphatic nitrile + H2O. With respect to regulation, inactivated by oxidation of Cys-110 to a sulfenic acid. Its function is as follows. NHase catalyzes the hydration of various nitrile compounds to the corresponding amides. Industrial production of acrylamide is now being developed using some of the enzymes of this class. This Pseudomonas chlororaphis (Pseudomonas aureofaciens) protein is Nitrile hydratase subunit alpha (nthA).